Here is a 424-residue protein sequence, read N- to C-terminus: Anaerobic glycerol-3-phosphate dehydrogenase subunit B (424 aa).

It belongs to the anaerobic G-3-P dehydrogenase subunit B family. Composed of a catalytic GlpA/B dimer and of membrane bound GlpC. Requires FMN as cofactor.

It catalyses the reaction a quinone + sn-glycerol 3-phosphate = dihydroxyacetone phosphate + a quinol. It participates in polyol metabolism; glycerol degradation via glycerol kinase pathway; glycerone phosphate from sn-glycerol 3-phosphate (anaerobic route): step 1/1. Its function is as follows. Conversion of glycerol 3-phosphate to dihydroxyacetone. Uses fumarate or nitrate as electron acceptor. The chain is Anaerobic glycerol-3-phosphate dehydrogenase subunit B from Yersinia pseudotuberculosis serotype I (strain IP32953).